Consider the following 293-residue polypeptide: ATP synthase gamma chain (293 aa).

This sequence belongs to the ATPase gamma chain family. In terms of assembly, F-type ATPases have 2 components, CF(1) - the catalytic core - and CF(0) - the membrane proton channel. CF(1) has five subunits: alpha(3), beta(3), gamma(1), delta(1), epsilon(1). CF(0) has three main subunits: a, b and c.

It is found in the cell inner membrane. Functionally, produces ATP from ADP in the presence of a proton gradient across the membrane. The gamma chain is believed to be important in regulating ATPase activity and the flow of protons through the CF(0) complex. This chain is ATP synthase gamma chain, found in Psychrobacter cryohalolentis (strain ATCC BAA-1226 / DSM 17306 / VKM B-2378 / K5).